We begin with the raw amino-acid sequence, 110 residues long: UPF0235 protein Mpop_2087 (110 aa).

Belongs to the UPF0235 family.

This is UPF0235 protein Mpop_2087 from Methylorubrum populi (strain ATCC BAA-705 / NCIMB 13946 / BJ001) (Methylobacterium populi).